Consider the following 490-residue polypeptide: One cut domain family member 3 (490 aa).

Disordered stretches follow at residues 130 to 155 (GAHG…QRLA), 193 to 213 (LSPL…PPPP), and 287 to 316 (HGPH…AAAE). Positions 143-152 (ATAPPPPPPQ) are enriched in pro residues. A compositionally biased stretch (gly residues) spans 290 to 311 (HSGGGGPGGGGGAGGGSGGPGA). The CUT DNA-binding region spans 309–395 (PGAGAAAEEI…QRMSALRLAA (87 aa)). Positions 411–470 (PKKQRLVFTDLQRRTLIAIFKENKRPSKEMQATISQQLGLELNTVSNFFMNARRRCMNRW) form a DNA-binding region, homeobox.

Belongs to the CUT homeobox family. In terms of tissue distribution, specifically expressed in brain, stomach and gut. Within the gut, expressed only in duodenum and jejunum.

The protein localises to the nucleus. Transcriptional activator. Binds the consensus DNA sequence 5'-DHWATTGAYTWWD-3' on a variety of gene promoters such as those of HNF3B and TTR. This Mus musculus (Mouse) protein is One cut domain family member 3 (Onecut3).